We begin with the raw amino-acid sequence, 497 residues long: Glutamyl-tRNA(Gln) amidotransferase subunit A (497 aa).

Residues K91 and S166 each act as charge relay system in the active site. The interval 143 to 171 (SSTENSAYGPTHNPWDLERTAGGSGGGSS) is disordered. S190 acts as the Acyl-ester intermediate in catalysis.

This sequence belongs to the amidase family. GatA subfamily. Heterotrimer of A, B and C subunits.

It catalyses the reaction L-glutamyl-tRNA(Gln) + L-glutamine + ATP + H2O = L-glutaminyl-tRNA(Gln) + L-glutamate + ADP + phosphate + H(+). Allows the formation of correctly charged Gln-tRNA(Gln) through the transamidation of misacylated Glu-tRNA(Gln) in organisms which lack glutaminyl-tRNA synthetase. The reaction takes place in the presence of glutamine and ATP through an activated gamma-phospho-Glu-tRNA(Gln). This Corynebacterium glutamicum (strain R) protein is Glutamyl-tRNA(Gln) amidotransferase subunit A.